Here is a 224-residue protein sequence, read N- to C-terminus: Ribonuclease HII (224 aa).

The RNase H type-2 domain maps to 33-224; the sequence is FHVAGVDEVG…LKERYRNDVS (192 aa). A divalent metal cation is bound by residues aspartate 39, glutamate 40, and aspartate 131.

This sequence belongs to the RNase HII family. Mn(2+) is required as a cofactor. Mg(2+) serves as cofactor.

The protein resides in the cytoplasm. The enzyme catalyses Endonucleolytic cleavage to 5'-phosphomonoester.. Its function is as follows. Endonuclease that specifically degrades the RNA of RNA-DNA hybrids. The polypeptide is Ribonuclease HII (Bartonella tribocorum (strain CIP 105476 / IBS 506)).